The following is a 360-amino-acid chain: Protein phosphatase 1L (360 aa).

Residues 1–25 (MIEDTMTLLSLLGRIMRYFLLRPET) lie on the Extracellular side of the membrane. Residues 26-42 (LFLLCISLALWSYFFHT) traverse the membrane as a helical segment. Residues 43–360 (DEVKTIVKSS…FRNSSKTEEH (318 aa)) are Cytoplasmic-facing. Positions 92 to 351 (NVAVYSIQGR…DNITVMVVKF (260 aa)) constitute a PPM-type phosphatase domain. Residues aspartate 128, glycine 129, aspartate 302, and aspartate 342 each contribute to the Mn(2+) site.

The protein belongs to the PP2C family. Interacts with MAP3K7/TAK1 and MAP3K5. Requires Mg(2+) as cofactor. It depends on Mn(2+) as a cofactor. As to expression, expressed in brain, heart, testis, liver, lung and skeletal muscle.

The protein localises to the membrane. The enzyme catalyses O-phospho-L-seryl-[protein] + H2O = L-seryl-[protein] + phosphate. The catalysed reaction is O-phospho-L-threonyl-[protein] + H2O = L-threonyl-[protein] + phosphate. In terms of biological role, acts as a suppressor of the SAPK signaling pathways by associating with and dephosphorylating MAP3K7/TAK1 and MAP3K5, and by attenuating the association between MAP3K7/TAK1 and MAP2K4 or MAP2K6. In Mus musculus (Mouse), this protein is Protein phosphatase 1L (Ppm1l).